The sequence spans 473 residues: MNAAVIDSKNSQDFVVADMSLADWGRKELNIAETEMPGLVQTREEYKAQQPLKGARIAGSLHMTIQTGVLIETLTALGADVRWASCNIFSTQDHAAAAIAKAGTPVFAFKGESLDEYWEFSHRIFEWPNGEFANMILDDGGDATLLLILGSKAEKDRSVISKPTNEEEVALYKSIASHLDADPTWYSTRLAHIQGVTEETTTGVHRLYQMEKEGRLPFPAINVNDSVTKSKFDNLYGCRESLVDGIKRATDVMIAGKIAVVAGYGDVGKGCAQSLRGLGATVWVTEIDPICALQAAMEGYRVVTMEYAADKADIFVTATGNYHVIGHDHMKAMRHNAIVCNIGHFDSEIDVASTRQYQWDNIKPQVDHIIFPDGKRVILLAEGRLVNLGCATGHPSFVMSNSFTNQTLAQIELFTQGEKYENKVYVLPKHLDEKVARLHLARIGANLTVLSDDQAGYIGVDKNGPFKPNHYRY.

Substrate-binding residues include threonine 64, aspartate 139, and glutamate 199. NAD(+) is bound at residue 200–202 (TTT). Lysine 229 and aspartate 233 together coordinate substrate. NAD(+)-binding positions include asparagine 234, 263–268 (GYGDVG), glutamate 286, asparagine 321, 342–344 (IGH), and asparagine 387.

This sequence belongs to the adenosylhomocysteinase family. The cofactor is NAD(+).

Its subcellular location is the cytoplasm. It catalyses the reaction S-adenosyl-L-homocysteine + H2O = L-homocysteine + adenosine. Its pathway is amino-acid biosynthesis; L-homocysteine biosynthesis; L-homocysteine from S-adenosyl-L-homocysteine: step 1/1. May play a key role in the regulation of the intracellular concentration of adenosylhomocysteine. The sequence is that of Adenosylhomocysteinase from Paraburkholderia phytofirmans (strain DSM 17436 / LMG 22146 / PsJN) (Burkholderia phytofirmans).